A 76-amino-acid polypeptide reads, in one-letter code: ATP synthase subunit c (76 aa).

Transmembrane regions (helical) follow at residues 5-25 (GIIA…GIGI) and 54-74 (AALA…LVFL).

This sequence belongs to the ATPase C chain family. In terms of assembly, F-type ATPases have 2 components, F(1) - the catalytic core - and F(0) - the membrane proton channel. F(1) has five subunits: alpha(3), beta(3), gamma(1), delta(1), epsilon(1). F(0) has three main subunits: a(1), b(2) and c(10-14). The alpha and beta chains form an alternating ring which encloses part of the gamma chain. F(1) is attached to F(0) by a central stalk formed by the gamma and epsilon chains, while a peripheral stalk is formed by the delta and b chains.

The protein localises to the cell membrane. Its function is as follows. F(1)F(0) ATP synthase produces ATP from ADP in the presence of a proton or sodium gradient. F-type ATPases consist of two structural domains, F(1) containing the extramembraneous catalytic core and F(0) containing the membrane proton channel, linked together by a central stalk and a peripheral stalk. During catalysis, ATP synthesis in the catalytic domain of F(1) is coupled via a rotary mechanism of the central stalk subunits to proton translocation. In terms of biological role, key component of the F(0) channel; it plays a direct role in translocation across the membrane. A homomeric c-ring of between 10-14 subunits forms the central stalk rotor element with the F(1) delta and epsilon subunits. The protein is ATP synthase subunit c of Ruminiclostridium cellulolyticum (strain ATCC 35319 / DSM 5812 / JCM 6584 / H10) (Clostridium cellulolyticum).